We begin with the raw amino-acid sequence, 57 residues long: Peptide BmKa1 (57 aa).

The first 22 residues, 1-22 (MKPRVFFLLFLLVAAMIETGES), serve as a signal peptide directing secretion. Acidic residues-rich tracts occupy residues 20 to 29 (GESEENEEGS) and 45 to 57 (VDNE…GDSD). The interval 20 to 57 (GESEENEEGSNESGKSTEAKNTDASVDNEDSDIDGDSD) is disordered.

It belongs to the non-disulfide-bridged peptide (NDBP) superfamily. As to expression, expressed by the venom gland.

It localises to the secreted. This is Peptide BmKa1 from Olivierus martensii (Manchurian scorpion).